We begin with the raw amino-acid sequence, 687 residues long: Adhesion G-protein coupled receptor G1 (687 aa).

The first 25 residues, Met1–Gly25, serve as a signal peptide directing secretion. Position 26-33 (Arg26–Arg33) interacts with heparin. Residues Arg26–Tyr402 are Extracellular-facing. 2 disulfides stabilise this stretch: Cys35/Cys91 and Cys121/Cys177. N-linked (GlcNAc...) asparagine glycosylation is found at Asn39, Asn148, Asn156, and Asn171. A heparin-binding site is contributed by Leu190–Pro200. The GAIN-B domain occupies Asp224–Val395. N-linked (GlcNAc...) asparagine glycosylation is found at Asn234, Asn303, Asn324, and Asn341. Cystine bridges form between Cys346–Cys377 and Cys366–Cys379. The interval Cys346 to Val395 is GPS. The interval Tyr384–Ala397 is stachel. The helical transmembrane segment at Leu403–Ala423 threads the bilayer. Residues Ala424–Asn442 lie on the Cytoplasmic side of the membrane. A helical transmembrane segment spans residues Leu443 to Thr463. Over Gly464–Arg470 the chain is Extracellular. The chain crosses the membrane as a helical span at residues Ala471 to Gly491. At Tyr492–Lys512 the chain is on the cytoplasmic side. The chain crosses the membrane as a helical span at residues Leu513–Val533. Topologically, residues Asp534–Gly570 are extracellular. Residues Leu571 to Leu591 traverse the membrane as a helical segment. Residues Arg592–Val603 lie on the Cytoplasmic side of the membrane. A helical membrane pass occupies residues Leu604 to Phe624. The Extracellular segment spans residues Ala625–Gln630. The chain crosses the membrane as a helical span at residues Leu631–Trp651. The Cytoplasmic portion of the chain corresponds to Tyr652–Ile687. Positions Ser664 to Ile687 are disordered. A compositionally biased stretch (polar residues) spans Leu666–Ile687.

The protein belongs to the G-protein coupled receptor 2 family. LN-TM7 subfamily. Heterodimer of 2 chains generated by proteolytic processing; the large extracellular N-terminal fragment (ADGRG1 NT) and the membrane-bound C-terminal fragment (ADGRG1-CT) predominantly remain associated and non-covalently linked. ADGRG1 NT self-associates in a trans-trans manner; the homophilic interaction enhances receptor signaling. Interacts with TGM2. Interacts with heparin; leading to the reduction of ADGRG1 shedding. Interacts with COL3A1. Part of a GPCR-tetraspanin complex at least consisting of ADGRG1, CD81, eventually CD9, and GNA11 in which CD81 is enhancing the association of ADGRG1 with GNA11. Autoproteolytically cleaved into 2 fragments; the large extracellular N-terminal fragment (ADGRG1 NT) and the membrane-bound C-terminal fragment (ADGRG1 CT) predominantly remain associated and non-covalently linked. Shedding to yield the secreted ADGRG1 N-terminal fragment seems to involve metalloprotease(s). Post-translationally, ubiquitinated. Undergoes polyubiquitination upon activation.

It localises to the cell membrane. The protein localises to the secreted. It is found in the membrane raft. With respect to regulation, forms a heterodimer of 2 chains generated by proteolytic processing that remain associated through non-covalent interactions mediated by the GAIN-B domain. In the inactivated receptor, the Stachel sequence (also named stalk) is embedded in the GAIN-B domain, where it adopts a beta-strand conformation. On activation, the Stachel moves into the 7 transmembrane region and adopts a twisted hook-shaped configuration that forms contacts within the receptor, leading to coupling of a G-alpha protein, which activates signaling. The cleaved GAIN-B and N-terminal domains can then dissociate from the rest of the receptor. In terms of biological role, adhesion G-protein coupled receptor (aGPCR) for steroid hormone 17alpha-hydroxypregnenolone (17-OH), which is involved in cell adhesion and cell-cell interactions. Ligand binding causes a conformation change that triggers signaling via guanine nucleotide-binding proteins (G proteins) and modulates the activity of downstream effectors, such as RhoA pathway. ADGRG1 is coupled to G(12) and/or G(13) G proteins (GNA12 and GNA13, respectively) and mediates the activation Rho small GTPases. Acts as a potent suppressor of ferroptosis: binding to 17-OH-binding initiates signaling that down-regulates CD36 and alleviates ferroptosis-induced liver injury. Ligand-binding also induces cell adhesion activity via association with proteins such as collagen III/COL3A1 and TGM2. Mediates cell matrix adhesion in developing neurons and hematopoietic stem cells. Involved in cortical development, specifically in maintenance of the pial basement membrane integrity and in cortical lamination: association with COL3A1 in the developing brain inhibits neuronal migration via activation of the RhoA pathway. Together with TGM2, acts as a regulator of myelination and myelin repair in oligodendrocyte precursor cells. Acts as a hemostatic sensor of shear force: G protein-coupled receptor signaling is activated in response to shear force in platelets, promoting G(13) G protein signaling, and platelet shape change and aggregation in a COL3A1-dependent manner. Acts as an inhibitor of VEGFA production thereby inhibiting angiogenesis through a signaling pathway mediated by PRKCA. Plays a role in the maintenance of hematopoietic stem cells in bone marrow niche. Plays an essential role in testis development. This Macaca mulatta (Rhesus macaque) protein is Adhesion G-protein coupled receptor G1 (ADGRG1).